A 78-amino-acid polypeptide reads, in one-letter code: Large ribosomal subunit protein bL28 (78 aa).

Belongs to the bacterial ribosomal protein bL28 family.

The sequence is that of Large ribosomal subunit protein bL28 from Psychrobacter sp. (strain PRwf-1).